The chain runs to 305 residues: MSKKLTFQEIILTLQRFWNDQGCMLMQAYDNEKGAGTMSPYTFLRAIGPEPWNAAYVEPSRRPADGRYGENPNRLYQHHQFQVVMKPSPSNIQELYLESLEKLGINPLEHDIRFVEDNWENPSTGSAGLGWEVWLDGMEITQFTYFQQVGGLATGPVTAEVTYGLERLASYIQEVDSVYDIEWADGVKYGEIFIQPEYEHSKYSFEISDQEMLLENFDKFEKEAGRALEEGLVHPAYDYVLKCSHTFNLLDARGAVSVTERAGYIARIRNLARVVAKTFVAERKRLGYPLLDEETRAKLLAEDAE.

This sequence belongs to the class-II aminoacyl-tRNA synthetase family. As to quaternary structure, tetramer of two alpha and two beta subunits.

The protein localises to the cytoplasm. The catalysed reaction is tRNA(Gly) + glycine + ATP = glycyl-tRNA(Gly) + AMP + diphosphate. The polypeptide is Glycine--tRNA ligase alpha subunit (Streptococcus pneumoniae (strain CGSP14)).